The following is a 43-amino-acid chain: Protein PsbN (43 aa).

Residues Thr-5–Phe-27 traverse the membrane as a helical segment.

This sequence belongs to the PsbN family.

The protein localises to the plastid. It localises to the chloroplast thylakoid membrane. May play a role in photosystem I and II biogenesis. The sequence is that of Protein PsbN from Eucalyptus globulus subsp. globulus (Tasmanian blue gum).